We begin with the raw amino-acid sequence, 276 residues long: 3-keto-5-aminohexanoate cleavage enzyme (276 aa).

(5S)-5-amino-3-oxohexanoate is bound at residue E14. Residues H46 and H48 each coordinate Zn(2+). Positions 82, 85, 106, and 108 each coordinate (5S)-5-amino-3-oxohexanoate. E230 contacts Zn(2+).

This sequence belongs to the BKACE family. Kce subfamily. As to quaternary structure, homotetramer. Requires Zn(2+) as cofactor.

It carries out the reaction (5S)-5-amino-3-oxohexanoate + acetyl-CoA = (3S)-3-aminobutanoyl-CoA + acetoacetate. It functions in the pathway amino-acid degradation; L-lysine degradation via acetate pathway. In terms of biological role, involved in the anaerobic fermentation of lysine. Catalyzes the reversible reaction between 3-keto-5-aminohexanoate (KAH) and acetyl-CoA to form 3-aminobutyryl-CoA and acetoacetate. The reaction involves the deprotonation of KAH, the nucleophilic addition onto acetyl-CoA and the intramolecular transfer of the CoA moiety. This is 3-keto-5-aminohexanoate cleavage enzyme from Cloacimonas acidaminovorans (strain Evry).